The following is a 325-amino-acid chain: Ribonucleoside-diphosphate reductase subunit beta (325 aa).

Aspartate 73, glutamate 104, and histidine 107 together coordinate Fe cation. Residue tyrosine 111 is part of the active site. Fe cation contacts are provided by glutamate 164, glutamate 198, and histidine 201.

Belongs to the ribonucleoside diphosphate reductase small chain family. Tetramer of two alpha and two beta subunits. Fe cation is required as a cofactor.

It catalyses the reaction a 2'-deoxyribonucleoside 5'-diphosphate + [thioredoxin]-disulfide + H2O = a ribonucleoside 5'-diphosphate + [thioredoxin]-dithiol. In terms of biological role, provides the precursors necessary for DNA synthesis. Catalyzes the biosynthesis of deoxyribonucleotides from the corresponding ribonucleotides. This is Ribonucleoside-diphosphate reductase subunit beta (nrdF) from Mycobacterium leprae (strain TN).